A 1198-amino-acid polypeptide reads, in one-letter code: Rac guanine nucleotide exchange factor B (1198 aa).

Residues 1–104 (MFSNFFGSSK…QHQGVITSLQ (104 aa)) form a disordered region. Positions 8–20 (SSKRNTIASSSSS) are enriched in low complexity. Positions 21–34 (SKKDKDNGKDESSK) are enriched in basic and acidic residues. Positions 35 to 58 (LKNSGSSTLPKPITNNESGNNFIT) are enriched in polar residues. Residues 59 to 97 (SPSVSSPLISPLSSSPSPLLSSSSNSIQSTSHQQQQQHQ) show a composition bias toward low complexity. The Calponin-homology (CH) 1 domain occupies 126–232 (SSLEQTARKW…NIVVLGKHAS (107 aa)). The segment at 260-284 (FGGNHNNNNNNNNNNNTSNGDLSPV) is disordered. Low complexity predominate over residues 263–275 (NHNNNNNNNNNNN). 2 Calponin-homology (CH) domains span residues 341–449 (PELQ…NKMY) and 511–619 (PEDM…ENFD). The DH domain maps to 632–846 (RRQKVIEEII…KRVADHVNES (215 aa)). Residues 876-1026 (TYIREGFLEI…WMEDLRSCLQ (151 aa)) enclose the PH domain. Over residues 940–952 (GEACVDGDDDGGE) the composition is skewed to acidic residues. Disordered regions lie at residues 940-989 (GEAC…SNKS) and 1076-1198 (NNNN…IDNQ). 2 stretches are compositionally biased toward low complexity: residues 977 to 989 (NSNN…SNKS) and 1076 to 1118 (NNNN…NNND). A compositionally biased stretch (acidic residues) spans 1155-1167 (DETISDTESDDYE). The span at 1188–1198 (FSDTIKNIDNQ) shows a compositional bias: polar residues.

In terms of assembly, binds to F-actin.

It localises to the late endosome. In terms of biological role, involved in the regulation of the late steps of the endocytic pathway. This is Rac guanine nucleotide exchange factor B (gxcB) from Dictyostelium discoideum (Social amoeba).